The chain runs to 489 residues: Glutamyl-tRNA(Gln) amidotransferase subunit A (489 aa).

Catalysis depends on charge relay system residues Lys77 and Ser152. Residue Ser176 is the Acyl-ester intermediate of the active site.

It belongs to the amidase family. GatA subfamily. As to quaternary structure, heterotrimer of A, B and C subunits.

It carries out the reaction L-glutamyl-tRNA(Gln) + L-glutamine + ATP + H2O = L-glutaminyl-tRNA(Gln) + L-glutamate + ADP + phosphate + H(+). Its function is as follows. Allows the formation of correctly charged Gln-tRNA(Gln) through the transamidation of misacylated Glu-tRNA(Gln) in organisms which lack glutaminyl-tRNA synthetase. The reaction takes place in the presence of glutamine and ATP through an activated gamma-phospho-Glu-tRNA(Gln). The chain is Glutamyl-tRNA(Gln) amidotransferase subunit A from Levilactobacillus brevis (strain ATCC 367 / BCRC 12310 / CIP 105137 / JCM 1170 / LMG 11437 / NCIMB 947 / NCTC 947) (Lactobacillus brevis).